The primary structure comprises 265 residues: HTH-type transcriptional activator CfaD (265 aa).

The 98-residue stretch at 164 to 261 (DKVRNVIEKD…GVTPKQFFTY (98 aa)) folds into the HTH araC/xylS-type domain. DNA-binding regions (H-T-H motif) lie at residues 181–202 (GIIA…ESEN) and 228–251 (ISQI…NKHY).

In terms of assembly, homodimer.

Functionally, transcriptional activator of the CFA/I adhesin (cfaA and cfaB) genes of enterotoxigenic E.coli at 37 degrees Celsius. Also represses the silencing effect of H-NS (hns). The polypeptide is HTH-type transcriptional activator CfaD (Escherichia coli).